A 405-amino-acid chain; its full sequence is ATP phosphoribosyltransferase regulatory subunit (405 aa).

This sequence belongs to the class-II aminoacyl-tRNA synthetase family. HisZ subfamily. As to quaternary structure, heteromultimer composed of HisG and HisZ subunits.

It localises to the cytoplasm. It participates in amino-acid biosynthesis; L-histidine biosynthesis; L-histidine from 5-phospho-alpha-D-ribose 1-diphosphate: step 1/9. Functionally, required for the first step of histidine biosynthesis. May allow the feedback regulation of ATP phosphoribosyltransferase activity by histidine. The sequence is that of ATP phosphoribosyltransferase regulatory subunit from Oceanobacillus iheyensis (strain DSM 14371 / CIP 107618 / JCM 11309 / KCTC 3954 / HTE831).